The sequence spans 88 residues: Small ribosomal subunit protein uS17 (88 aa).

This sequence belongs to the universal ribosomal protein uS17 family. As to quaternary structure, part of the 30S ribosomal subunit.

In terms of biological role, one of the primary rRNA binding proteins, it binds specifically to the 5'-end of 16S ribosomal RNA. This is Small ribosomal subunit protein uS17 from Pseudomonas fluorescens (strain SBW25).